Reading from the N-terminus, the 267-residue chain is Indole-3-glycerol phosphate synthase (267 aa).

This sequence belongs to the TrpC family.

The enzyme catalyses 1-(2-carboxyphenylamino)-1-deoxy-D-ribulose 5-phosphate + H(+) = (1S,2R)-1-C-(indol-3-yl)glycerol 3-phosphate + CO2 + H2O. The protein operates within amino-acid biosynthesis; L-tryptophan biosynthesis; L-tryptophan from chorismate: step 4/5. This chain is Indole-3-glycerol phosphate synthase, found in Cupriavidus necator (strain ATCC 17699 / DSM 428 / KCTC 22496 / NCIMB 10442 / H16 / Stanier 337) (Ralstonia eutropha).